A 576-amino-acid polypeptide reads, in one-letter code: Enolase 4 (576 aa).

Residues 187-232 form a disordered region; that stretch reads ELRNEAMSEAPPQATPTSAPAKDKKGNDKGKKGNITENPLPPAEPP. The segment covering 196–206 has biased composition (low complexity); the sequence is APPQATPTSAP. The span at 207-217 shows a compositional bias: basic and acidic residues; sequence AKDKKGNDKGK. Positions 302 and 524 each coordinate substrate.

This sequence belongs to the enolase family.

The catalysed reaction is (2R)-2-phosphoglycerate = phosphoenolpyruvate + H2O. Its pathway is carbohydrate degradation; glycolysis; pyruvate from D-glyceraldehyde 3-phosphate: step 4/5. In Danio rerio (Zebrafish), this protein is Enolase 4 (eno4).